The chain runs to 334 residues: AT-hook motif nuclear-localized protein 2 (334 aa).

A compositionally biased stretch (low complexity) spans 1–21 (METTGEVVKTTTGSDGGVTVV). 2 disordered regions span residues 1-103 (METT…PTTS) and 109-128 (STTSEKRGKMKPATPTPSSF). Pro residues predominate over residues 44–54 (SVAPPPPPPPQ). The span at 71-80 (IKKRRGRPRK) shows a compositional bias: basic residues. The Bipartite nuclear localization signal signature appears at 72–80 (KKRRGRPRK). A DNA-binding region (a.T hook) is located at residues 72–84 (KKRRGRPRKYGHD). Positions 90–103 (LSPNPISSAAPTTS) are enriched in polar residues. The region spanning 147–287 (AANFTPHIIT…PHNHNFMSSP (141 aa)) is the PPC domain. Positions 306-319 (SSLPISTWTPSFPS) are enriched in polar residues. The interval 306 to 334 (SSLPISTWTPSFPSDSRHKHSHDFNITLT) is disordered.

Its subcellular location is the nucleus. In terms of biological role, transcription factor that specifically binds AT-rich DNA sequences related to the nuclear matrix attachment regions (MARs). The polypeptide is AT-hook motif nuclear-localized protein 2 (Arabidopsis thaliana (Mouse-ear cress)).